Consider the following 213-residue polypeptide: Orotate phosphoribosyltransferase (213 aa).

K26 is a 5-phospho-alpha-D-ribose 1-diphosphate binding site. Residue 34–35 coordinates orotate; it reads FF. 5-phospho-alpha-D-ribose 1-diphosphate-binding positions include 72 to 73, R99, K100, K103, H105, and 124 to 132; these read YK and DDVITAGTA. Orotate is bound by residues T128 and R156.

This sequence belongs to the purine/pyrimidine phosphoribosyltransferase family. PyrE subfamily. In terms of assembly, homodimer. The cofactor is Mg(2+).

The catalysed reaction is orotidine 5'-phosphate + diphosphate = orotate + 5-phospho-alpha-D-ribose 1-diphosphate. Its pathway is pyrimidine metabolism; UMP biosynthesis via de novo pathway; UMP from orotate: step 1/2. Functionally, catalyzes the transfer of a ribosyl phosphate group from 5-phosphoribose 1-diphosphate to orotate, leading to the formation of orotidine monophosphate (OMP). The chain is Orotate phosphoribosyltransferase from Salmonella choleraesuis (strain SC-B67).